The following is a 331-amino-acid chain: Peroxidase 60 (331 aa).

A signal peptide spans 1-26 (MAVKISTIEVLILSLALLSFGHGCYG). 4 disulfide bridges follow: Cys37–Cys113, Cys70–Cys75, Cys119–Cys321, and Cys198–Cys230. The active-site Proton acceptor is His68. Ca(2+) contacts are provided by Asp69, Gly74, Asp76, and Ser78. Pro161 contacts substrate. His191 is a binding site for heme b. Thr192 contacts Ca(2+). An N-linked (GlcNAc...) asparagine glycan is attached at Asn245. Residues Ser248 and Asp253 each coordinate Ca(2+).

This sequence belongs to the peroxidase family. Classical plant (class III) peroxidase subfamily. Heme b is required as a cofactor. The cofactor is Ca(2+). As to expression, expressed in roots, slightly in leaves.

The protein localises to the secreted. It carries out the reaction 2 a phenolic donor + H2O2 = 2 a phenolic radical donor + 2 H2O. In terms of biological role, removal of H(2)O(2), oxidation of toxic reductants, biosynthesis and degradation of lignin, suberization, auxin catabolism, response to environmental stresses such as wounding, pathogen attack and oxidative stress. These functions might be dependent on each isozyme/isoform in each plant tissue. In Arabidopsis thaliana (Mouse-ear cress), this protein is Peroxidase 60 (PER60).